Here is a 551-residue protein sequence, read N- to C-terminus: Glucans biosynthesis protein D (551 aa).

The tat-type signal signal peptide spans 1–32 (MNRRRFLQGSLAMAALSGTTGLSTLFSRAAFA).

It belongs to the OpgD/OpgG family. Post-translationally, predicted to be exported by the Tat system. The position of the signal peptide cleavage has not been experimentally proven.

Its subcellular location is the periplasm. The protein operates within glycan metabolism; osmoregulated periplasmic glucan (OPG) biosynthesis. In terms of biological role, probably involved in the control of the structural glucose backbone of osmoregulated periplasmic glucans (OPGs). The protein is Glucans biosynthesis protein D of Enterobacter sp. (strain 638).